The chain runs to 210 residues: Probable GTP-binding protein EngB (210 aa).

The 175-residue stretch at 30–204 folds into the EngB-type G domain; sequence QGYEVAFAGR…YRVLADWMEL (175 aa). GTP contacts are provided by residues 38–45, 64–68, 82–85, 149–152, and 182–185; these read GRSNAGKS, GRTQL, DLPG, TKAD, and LFSA. 2 residues coordinate Mg(2+): Ser45 and Thr66.

It belongs to the TRAFAC class TrmE-Era-EngA-EngB-Septin-like GTPase superfamily. EngB GTPase family. Mg(2+) is required as a cofactor.

Functionally, necessary for normal cell division and for the maintenance of normal septation. The chain is Probable GTP-binding protein EngB from Pseudomonas entomophila (strain L48).